We begin with the raw amino-acid sequence, 287 residues long: 4-hydroxybenzoate octaprenyltransferase (287 aa).

8 consecutive transmembrane segments (helical) span residues 23-43 (IGSL…GGTA), 46-66 (GKLL…GCVI), 99-119 (LFVL…AMTI), 141-161 (LPQV…YAAV), 162-182 (GESL…WTVA), 213-233 (LVIG…GDLN), 237-257 (GAYY…QQLI), and 266-286 (FRAF…ILLA).

This sequence belongs to the UbiA prenyltransferase family. It depends on Mg(2+) as a cofactor.

It localises to the cell inner membrane. It carries out the reaction all-trans-octaprenyl diphosphate + 4-hydroxybenzoate = 4-hydroxy-3-(all-trans-octaprenyl)benzoate + diphosphate. It functions in the pathway cofactor biosynthesis; ubiquinone biosynthesis. Functionally, catalyzes the prenylation of para-hydroxybenzoate (PHB) with an all-trans polyprenyl group. Mediates the second step in the final reaction sequence of ubiquinone-8 (UQ-8) biosynthesis, which is the condensation of the polyisoprenoid side chain with PHB, generating the first membrane-bound Q intermediate 3-octaprenyl-4-hydroxybenzoate. The protein is 4-hydroxybenzoate octaprenyltransferase of Edwardsiella ictaluri (strain 93-146).